The following is a 424-amino-acid chain: Lactate racemase (424 aa).

Ni(II)-pyridinium-3,5-bisthiocarboxylate mononucleotide is bound at residue 72 to 75; it reads DHTR. Residues His-108 and His-174 each act as proton donor/acceptor in the active site. Residues Lys-184 and His-200 each contribute to the Ni(II)-pyridinium-3,5-bisthiocarboxylate mononucleotide site. 2 residues coordinate substrate: Gln-295 and Lys-298.

This sequence belongs to the lactate racemase family. In terms of assembly, homodimer. Ni(II)-pyridinium-3,5-bisthiocarboxylate mononucleotide serves as cofactor.

It carries out the reaction (S)-lactate = (R)-lactate. Its activity is regulated as follows. Activation of the apo-enzyme requires the three accessory proteins LarB, LarE and LarC, that are involved in the biosynthesis of the nickel-pincer cofactor of LarA. Inhibited by sulfite that behaves as a mixed inhibitor. Catalyzes the interconversion between the D- and L-isomers of lactate. May act as a rescue enzyme to ensure D-lactate production in physiological conditions where its production by the D-lactate dehydrogenase LdhD is not sufficient. D-Lactate is absolutely required for growth of L.plantarum and is an essential component of the cell wall peptidoglycan in this species, where it is incorporated as the last residue of the muramoyl-pentadepsipeptide peptidoglycan precursor; its incorporation confers high level of vancomycin resistance. This chain is Lactate racemase, found in Lactiplantibacillus plantarum (strain ATCC BAA-793 / NCIMB 8826 / WCFS1) (Lactobacillus plantarum).